The following is a 375-amino-acid chain: Alcohol dehydrogenase 1 (375 aa).

The residue at position 2 (serine 2) is an N-acetylserine. Cysteine 47, histidine 68, cysteine 98, cysteine 101, cysteine 104, cysteine 112, and cysteine 175 together coordinate Zn(2+). NAD(+) contacts are provided by residues 200 to 205 (WSGRVG), aspartate 224, and lysine 229. Lysine 234 carries the post-translational modification N6-succinyllysine. Residue 293 to 295 (VGV) participates in NAD(+) binding. Lysine 340 carries the N6-succinyllysine modification. NAD(+) is bound at residue arginine 370.

This sequence belongs to the zinc-containing alcohol dehydrogenase family. Class-I subfamily. In terms of assembly, homodimer. It depends on Zn(2+) as a cofactor.

The protein localises to the cytoplasm. It catalyses the reaction a primary alcohol + NAD(+) = an aldehyde + NADH + H(+). The catalysed reaction is a secondary alcohol + NAD(+) = a ketone + NADH + H(+). This chain is Alcohol dehydrogenase 1 (ADH1), found in Geomys bursarius (Plains pocket gopher).